We begin with the raw amino-acid sequence, 284 residues long: Acetylglutamate kinase (284 aa).

Substrate is bound by residues 66 to 67 (GG), R88, and N179.

Belongs to the acetylglutamate kinase family. ArgB subfamily.

The protein resides in the cytoplasm. The catalysed reaction is N-acetyl-L-glutamate + ATP = N-acetyl-L-glutamyl 5-phosphate + ADP. It functions in the pathway amino-acid biosynthesis; L-arginine biosynthesis; N(2)-acetyl-L-ornithine from L-glutamate: step 2/4. Catalyzes the ATP-dependent phosphorylation of N-acetyl-L-glutamate. The chain is Acetylglutamate kinase from Actinobacillus pleuropneumoniae serotype 5b (strain L20).